Here is a 205-residue protein sequence, read N- to C-terminus: Octanoyltransferase (205 aa).

Positions 30 to 205 constitute a BPL/LPL catalytic domain; it reads NSADELVWLL…ILKKEFYKIF (176 aa). Substrate is bound by residues 68–75, 140–142, and 153–155; these read RGGKHTYH, AFG, and GIA. Catalysis depends on Cys-171, which acts as the Acyl-thioester intermediate.

This sequence belongs to the LipB family.

It localises to the cytoplasm. The catalysed reaction is octanoyl-[ACP] + L-lysyl-[protein] = N(6)-octanoyl-L-lysyl-[protein] + holo-[ACP] + H(+). Its pathway is protein modification; protein lipoylation via endogenous pathway; protein N(6)-(lipoyl)lysine from octanoyl-[acyl-carrier-protein]: step 1/2. Functionally, catalyzes the transfer of endogenously produced octanoic acid from octanoyl-acyl-carrier-protein onto the lipoyl domains of lipoate-dependent enzymes. Lipoyl-ACP can also act as a substrate although octanoyl-ACP is likely to be the physiological substrate. The sequence is that of Octanoyltransferase from Wolbachia pipientis wMel.